A 1174-amino-acid polypeptide reads, in one-letter code: Protein kinase C-like (1174 aa).

The region spanning 1 to 68 (MANVEETVAN…LRDLDLQRTT (68 aa)) is the REM-1 1 domain. Over residues 69–84 (SGVDNMSLQPGRSPTN) the composition is skewed to polar residues. The segment at 69–140 (SGVDNMSLQP…PPPATANKRP (72 aa)) is disordered. The segment covering 96–123 (GYAQQDQGGYGGPQSQYSQLSGGEALQP) has biased composition (low complexity). Over residues 124-134 (PRAPFAAPPPA) the composition is skewed to pro residues. One can recognise an REM-1 2 domain in the interval 149–226 (KYDTPHLGPR…LKRYEDLHVD (78 aa)). The 121-residue stretch at 229–349 (GDGDDNDSLD…MRRKKLETEL (121 aa)) folds into the C2 domain. The disordered stretch occupies residues 358 to 406 (DKMGGHTGIQPDMQFQPPPGQSPAGGPGGGPTPAGVRPPGAPQPQTGPI). Positions 380–389 (PAGGPGGGPT) are enriched in gly residues. 2 Phorbol-ester/DAG-type zinc fingers span residues 458 to 506 (GHKF…VTKC) and 526 to 576 (PHRF…PDFC). Residues 593–842 (TRRGQSSSGP…PAANTQGTGK (250 aa)) form a disordered region. Polar residues predominate over residues 596-611 (GQSSSGPGMSQRTLRP). Positions 624 to 636 (QSPGQPGQESPTQ) are enriched in low complexity. Residues 648 to 657 (SPPPGPPRQP) show a composition bias toward pro residues. The segment covering 658–709 (SYPSSATSVDAARASYSTTGTASTGAPTSPTSGSRPPSGPRTQSSVAAAAAA) has biased composition (low complexity). The span at 720–744 (RSNTDYSPQSGRSSGSGYPTEQRMS) shows a compositional bias: polar residues. Residues 786–802 (LPQPPPPQSPPQHPQQP) are compositionally biased toward pro residues. A compositionally biased stretch (polar residues) spans 808-820 (KMPEQQALTQQPP). In terms of domain architecture, Protein kinase spans 849–1108 (FNFLAVLGKG…AQEIMSHAFF (260 aa)). ATP-binding positions include 855-863 (LGKGNFGKV) and Lys-878. The Proton acceptor role is filled by Asp-974. Residues 1109–1174 (RNINWDDIYH…RGFSYSADFA (66 aa)) form the AGC-kinase C-terminal domain.

The protein belongs to the protein kinase superfamily. AGC Ser/Thr protein kinase family. PKC subfamily.

The enzyme catalyses L-seryl-[protein] + ATP = O-phospho-L-seryl-[protein] + ADP + H(+). It catalyses the reaction L-threonyl-[protein] + ATP = O-phospho-L-threonyl-[protein] + ADP + H(+). The sequence is that of Protein kinase C-like (PKC1) from Cochliobolus heterostrophus (Southern corn leaf blight fungus).